A 115-amino-acid polypeptide reads, in one-letter code: Replication initiation control protein YabA (115 aa).

H90, C92, C106, and C109 together coordinate Zn(2+).

It belongs to the YabA family. As to quaternary structure, homotetramer. Interacts with both DnaA and DnaN, acting as a bridge between these two proteins. Zn(2+) serves as cofactor.

It is found in the cytoplasm. Its subcellular location is the nucleoid. In terms of biological role, involved in control of chromosome replication initiation. Inhibits the cooperative binding of DnaA to the oriC region, thus negatively regulating initiation of chromosome replication. Inhibits the ability of DnaA-ATP to form a helix on DNA; does not disassemble preformed DnaA-DNA helices. Decreases the residence time of DnaA on the chromosome at its binding sites (oriC, replication forks and promoter-binding sites). Tethers DnaA to the replication machinery via the DNA polymerase beta sliding clamp subunit (dnaN). Associates with oriC and other DnaA targets on the chromosome in a DnaA-dependent manner. The chain is Replication initiation control protein YabA from Staphylococcus aureus (strain JH1).